The sequence spans 134 residues: Translation initiation factor 2 subunit beta (134 aa).

The protein belongs to the eIF-2-beta/eIF-5 family. Heterotrimer composed of an alpha, a beta and a gamma chain.

Functionally, eIF-2 functions in the early steps of protein synthesis by forming a ternary complex with GTP and initiator tRNA. The chain is Translation initiation factor 2 subunit beta from Pyrobaculum aerophilum (strain ATCC 51768 / DSM 7523 / JCM 9630 / CIP 104966 / NBRC 100827 / IM2).